The sequence spans 593 residues: Insulin-like growth factor 2 mRNA-binding protein 3-B (593 aa).

RRM domains are found at residues 2 to 75 (NKLY…HSVP) and 81 to 156 (RKLQ…YIPD). The segment at 159–208 (ATPQSPSQQLQQPQQQHPQGRRGFGQRGPARQGSPGAAARPKPQSEVPLR) is disordered. The segment covering 161-176 (PQSPSQQLQQPQQQHP) has biased composition (low complexity). KH domains lie at 204–269 (EVPL…CKII) and 285–352 (EIPL…EEEV). The span at 390-402 (SGMPPPSAGVSSP) shows a compositional bias: low complexity. Positions 390 to 412 (SGMPPPSAGVSSPTTSASYPPFG) are disordered. KH domains follow at residues 417–482 (SETV…QGRI) and 499–565 (KLEA…QRKI). The interval 571 to 593 (QVRRQQQQQQKTAQSGQPQPRRK) is disordered.

The protein belongs to the RRM IMP/VICKZ family. In terms of assembly, homodimer and multimer. Associates with microtubules. Interaction with a translocation machinery protein TRAPA of the endoplasmic reticulum. Component of a mRNP complex, at least composed of DAZAP1, IGF2BP3, STAU and VgRBP60. The mRNP complex with DAZAP1, IGF2BP3, STAU and VgRBP60 is only found in the cytoplasm. Interacts with a hnRNP 1 related RNA transport protein VgRBP60 both in the nucleus (in an RNA-independent manner) and the cytoplasm (in an RNA-dependent manner). Found in a B3 activator complex. Expressed in oocytes, kidney and pancreas (at protein level). Expressed in oocytes, kidney and pancreas.

It is found in the nucleus. Its subcellular location is the cytoplasm. The protein resides in the endoplasmic reticulum. In terms of biological role, RNA-binding protein that acts as a regulator of mRNA transport and localization. Binds to the RNA sequence motif 5'-UUCAC-3'. Preferentially binds to N6-methyladenosine (m6A)-containing mRNAs and increases their stability. Mediates the specific association of Vg1 RNA to microtubules. May regulate mRNA translation. Binds specifically to the vegetal localization elements (VLE or VgLE) in the 3'-UTR of Vg1 and VegT mRNAs. Binds to the Vg1 and VegT mRNAs in both the nucleus and the cytoplasm. May regulate mRNA translation. Acts as a transcription regulator. Binds to the 5'-[TA]GGTTACT-3' motif within element 3 of the TFIIIA gene promoter. The sequence is that of Insulin-like growth factor 2 mRNA-binding protein 3-B (igf2bp3-b) from Xenopus laevis (African clawed frog).